The primary structure comprises 100 residues: Small ribosomal subunit protein bS20 (100 aa).

The segment at 79 to 100 (AAHQKSRLSAAVKQAIEPAPST) is disordered.

This sequence belongs to the bacterial ribosomal protein bS20 family.

In terms of biological role, binds directly to 16S ribosomal RNA. The protein is Small ribosomal subunit protein bS20 of Prochlorococcus marinus (strain MIT 9303).